The following is a 329-amino-acid chain: Cytosolic arginine sensor for mTORC1 subunit 1 (329 aa).

S14 carries the post-translational modification Phosphoserine. ACT domains lie at 72-138 (AEAT…HTLA) and 260-321 (GELW…EVLQ). L-arginine-binding positions include 111-112 (SV), G274, 280-281 (IV), and 300-304 (TFNFD).

This sequence belongs to the GATS family. In terms of assembly, forms homodimers and heterodimers with CASTOR2. Interacts with the GATOR2 complex which is composed of MIOS, SEC13, SEH1L, WDR24 and WDR59; the interaction is negatively regulated by arginine. Interacts with TM4SF5; the interaction is positively regulated by leucine and is negatively regulated by arginine. In terms of processing, phosphorylation at Ser-14 by AKT1, promoting the interaction between CASTOR1 and RNF167. Ubiquitinated by RNF167 via 'Lys-29'-polyubiquitination, leading to its degradation, releasing the GATOR2 complex. Ubiquitination by RNF167 is promoted by phosphorylation at Ser-14 by AKT1.

The protein localises to the cytoplasm. The protein resides in the cytosol. Functionally, functions as an intracellular arginine sensor within the amino acid-sensing branch of the TORC1 signaling pathway. As a homodimer or a heterodimer with CASTOR2, binds and inhibits the GATOR subcomplex GATOR2 and thereby mTORC1. Binding of arginine to CASTOR1 allosterically disrupts the interaction of CASTOR1-containing dimers with GATOR2 which can in turn activate mTORC1 and the TORC1 signaling pathway. The protein is Cytosolic arginine sensor for mTORC1 subunit 1 of Pongo abelii (Sumatran orangutan).